The chain runs to 475 residues: Ataxin-10 (475 aa).

The residue at position 10 (Arg10) is an Omega-N-methylarginine. Phosphoserine occurs at positions 12 and 77. Thr82 carries the post-translational modification Phosphothreonine. Residue Ser430 is modified to Phosphoserine.

This sequence belongs to the ataxin-10 family. Homooligomer. Interacts with GNB2. Interacts with IQCB1. Interacts with OGT. Interacts with PLK1. Polyubiquitinated. In terms of processing, phosphorylation at Ser-12 by AURKB promotes the association of ATXN10 with PLK1. Phosphorylation at Ser-77 and Thr-82 by PLK1 may play a role in the regulation of cytokinesis and may stimulate the proteasome-mediated degradation of ATXN10. In terms of tissue distribution, in high cell density areas; cerebellar cortex, dentate gyrus, hippocampus, anterior olfactory nucleus, primary olfactory cortex.

Its subcellular location is the cytoplasm. It localises to the perinuclear region. The protein resides in the midbody. The protein localises to the cytoskeleton. It is found in the cilium basal body. Its subcellular location is the microtubule organizing center. It localises to the centrosome. The protein resides in the centriole. May play a role in the regulation of cytokinesis. May play a role in signaling by stimulating protein glycosylation. Induces neuritogenesis by activating the Ras-MAP kinase pathway and is necessary for the survival of cerebellar neurons. Does not appear to play a major role in ciliogenesis. The protein is Ataxin-10 (Atxn10) of Mus musculus (Mouse).